A 408-amino-acid chain; its full sequence is Peptidase T (408 aa).

His78 contributes to the Zn(2+) binding site. The active site involves Asp80. A Zn(2+)-binding site is contributed by Asp141. Glu175 functions as the Proton acceptor in the catalytic mechanism. Glu176, Asp198, and His380 together coordinate Zn(2+).

This sequence belongs to the peptidase M20B family. Zn(2+) serves as cofactor.

It is found in the cytoplasm. It catalyses the reaction Release of the N-terminal residue from a tripeptide.. Its function is as follows. Cleaves the N-terminal amino acid of tripeptides. The chain is Peptidase T from Clostridium botulinum (strain Loch Maree / Type A3).